The chain runs to 98 residues: MPSIFINIILAFIIALLGMLIFRSHLMSSLLCLESMMLSMFILSTLTILSLHLTMSFMMPILLLVFAACEAAVGLALLVTVSNTYGLDYIQNLNLLQC.

A run of 3 helical transmembrane segments spans residues 2–22 (PSIFINIILAFIIALLGMLIF), 37–57 (MLSMFILSTLTILSLHLTMSF), and 61–81 (ILLLVFAACEAAVGLALLVTV).

This sequence belongs to the complex I subunit 4L family. In terms of assembly, core subunit of respiratory chain NADH dehydrogenase (Complex I) which is composed of 45 different subunits.

It localises to the mitochondrion inner membrane. It carries out the reaction a ubiquinone + NADH + 5 H(+)(in) = a ubiquinol + NAD(+) + 4 H(+)(out). Core subunit of the mitochondrial membrane respiratory chain NADH dehydrogenase (Complex I) which catalyzes electron transfer from NADH through the respiratory chain, using ubiquinone as an electron acceptor. Part of the enzyme membrane arm which is embedded in the lipid bilayer and involved in proton translocation. The sequence is that of NADH-ubiquinone oxidoreductase chain 4L (MT-ND4L) from Varecia rubra (Red ruffed lemur).